Reading from the N-terminus, the 297-residue chain is Adrenocorticotropic hormone receptor (297 aa).

Residues 1-23 are Extracellular-facing; the sequence is MKHIITPYEHTNDTARNNSDCPD. 2 N-linked (GlcNAc...) asparagine glycosylation sites follow: Asn-12 and Asn-17. 2 disulfides stabilise this stretch: Cys-21-Cys-253 and Cys-245-Cys-251. The helical transmembrane segment at 24–49 threads the bilayer; that stretch reads VVLPEEIFFTISIIGVLENLIVLLAV. Over 50 to 58 the chain is Cytoplasmic; sequence VKNKNLQCP. The helical transmembrane segment at 59-79 threads the bilayer; that stretch reads MYFFICSLAISDMLGSLYKIL. The Extracellular segment spans residues 80–104; the sequence is ENILIMFRNRGYLQPRGNFESTADD. The chain crosses the membrane as a helical span at residues 105–126; sequence IIDCMFILSLLGSIFSLSVIAA. Residues 127 to 147 are Cytoplasmic-facing; sequence DRYITIFHALQYHSIVTMRRT. A helical membrane pass occupies residues 148 to 168; the sequence is IITLTVIWIFCTGSGIAMVIF. Over 169–180 the chain is Extracellular; it reads SHHVPTVLTFTS. The chain crosses the membrane as a helical span at residues 181–199; that stretch reads LFPLMLVFILCLYIHMFLL. The Cytoplasmic portion of the chain corresponds to 200–217; that stretch reads ARSHARKISTLPRANMKG. Residues 218-244 traverse the membrane as a helical segment; that stretch reads AITLTILLGVFIFCWAPFILHVLLMTF. The Extracellular segment spans residues 245 to 256; the sequence is CPNNPYCVCYMS. The chain crosses the membrane as a helical span at residues 257–278; that stretch reads LFQINGMLIMCNAVIDPFIYAF. Over 279 to 297 the chain is Cytoplasmic; that stretch reads RSPELRDAFKKMFSCHRYQ. The S-palmitoyl cysteine moiety is linked to residue Cys-293.

It belongs to the G-protein coupled receptor 1 family. As to quaternary structure, homodimer. Interacts with corticotropin (ACTH). Interacts with MRAP; this interaction targets MC2R to the plasma membrane. Interacts with MRAP2; competing with MRAP for binding to MC2R and impairing the binding of corticotropin (ACTH). Ubiquitinated by MGRN1 that may be involved in post-endocytic trafficking and/or degradation of internalized receptor.

The protein localises to the cell membrane. In terms of biological role, hormone receptor primarily expressed in adrenal cortex that plays a key role in regulating adrenocortical function. Upon corticotropin (ACTH) binding, facilitates the release of adrenal glucocorticoids, including cortisol and corticosterone. In addition, MC2R is required for fetal and neonatal adrenal gland development. Mechanistically, activates adenylate cyclase (cAMP), the MAPK cascade as well as the cAMP-dependent protein kinase A pathway leading to steroidogenic factor 1/NR5A1-mediated transcriptional activation. This chain is Adrenocorticotropic hormone receptor (MC2R), found in Mesocricetus auratus (Golden hamster).